We begin with the raw amino-acid sequence, 1064 residues long: MTITEAVAVMEEAIETVVGHATEAQTERDRQIAEDNGAEMVTGTTAPAKSTPTQAQTEAEKKAERLRKLQAMKEKHAQKEAKEAAVTAGSTRMLLAEMDQKASGTPGPNSPVAGAMSPAPTSPAPPMPYAGKFDPKAIAKSSKAARPQSPTRLGDVKLAAPAPKPLGLKKEANLKGAGLLPANRAKSSTKRKIDMDDEEVIKRKLVKLPDFVPENADSTPDAEGEGEEEADDLDLLMAQNEEEMAEAHRVLQERRDERIQKEGMAMDVDTETPNGETKDEAENEANVESKDEAVLPAPSMDVDEDVDPLDAFMADLEQTGSAGGIGSVPARQKQKAGKGFEPEAYFSDDDYGYEEDKADPSSILAMASKKKKKDIPTIDYSKIELNQIRKNFWVEPQELSQMTEDDIADLRLELDGIKVSGKNVPKPVQKWSQCGLTRPILDVVEGLGYEKPTSIQMQALPVIMSGRDVIGVAKTGSGKTMAFVLPMLRHIKDQDPVTGDDGAIALIMTPTRELCTQIYSDLLPFAKALKLRAIAAYGGNAIKDQIAELKRGAEIIVATPGRMIDLLAANSGRVTNLKRATYLVLDEADRMFDMGFEPQVMKIFNNVRPDRQTILFSATMPRIIDALTKKVLREPVEIQVGGRSVVAPEITQIVEILDEGKKFVRLLELLGELYADDDDVRALIFVERQEKADDLLREVLRRGYGCMSIHGGKDQEDRNSTISDFKKGVCPIMIATSVAARGLDVKQLKLVVNYDAPNHLEDYVHRAGRTGRAGNTGTAVTFITEEQENCAPGIAKALEQSGQPVPEQLNEMRKAWKEKVKTGKAKDASGFGGKGLERLDKEREAARVRERKTHKAEGEEDDFKEEETAEDAAKKDKAKSAILAAASAIVSRESAKADASEAKPLPAAAEGAVKGGVTVNAGKGGALDKAASAISEINARLARAGQLRPGQPIDNKGPDAGAFHATLEINDFPQKARWAVTNRTNVAKILEATSTSITTKGNYYPPGKEPPSGSDPKLYILIEGDTELAVGKALSELTRLLREGTIAAADAESRAPASGRYTIA.

Disordered stretches follow at residues 22 to 63, 97 to 170, 211 to 231, 257 to 305, and 320 to 346; these read TEAQ…EKKA, EMDQ…GLKK, FVPE…EEAD, ERIQ…VDED, and GSAG…EAYF. The span at 42–57 shows a compositional bias: polar residues; sequence TGTTAPAKSTPTQAQT. Residues 220 to 231 show a composition bias toward acidic residues; that stretch reads PDAEGEGEEEAD. Residues 429–457 carry the Q motif motif; sequence QKWSQCGLTRPILDVVEGLGYEKPTSIQM. Positions 460–638 constitute a Helicase ATP-binding domain; it reads LPVIMSGRDV…KKVLREPVEI (179 aa). 473-480 lines the ATP pocket; sequence AKTGSGKT. The DEAD box motif lies at 586–589; it reads DEAD. The Helicase C-terminal domain maps to 665 to 813; sequence RLLELLGELY…PVPEQLNEMR (149 aa). The interval 820-872 is disordered; that stretch reads VKTGKAKDASGFGGKGLERLDKEREAARVRERKTHKAEGEEDDFKEEETAEDA. Residues 835 to 848 show a composition bias toward basic and acidic residues; it reads GLERLDKEREAARV. Positions 858–870 are enriched in acidic residues; the sequence is GEEDDFKEEETAE.

This sequence belongs to the DEAD box helicase family. DDX46/PRP5 subfamily.

The protein resides in the nucleus. The enzyme catalyses ATP + H2O = ADP + phosphate + H(+). Its function is as follows. ATP-dependent RNA helicase involved spliceosome assembly and in nuclear splicing. Catalyzes an ATP-dependent conformational change of U2 snRNP. Bridges U1 and U2 snRNPs and enables stable U2 snRNP association with intron RNA. The sequence is that of Pre-mRNA-processing ATP-dependent RNA helicase PRP5 (PRP5) from Chaetomium globosum (strain ATCC 6205 / CBS 148.51 / DSM 1962 / NBRC 6347 / NRRL 1970) (Soil fungus).